The primary structure comprises 378 residues: tRNA-specific 2-thiouridylase MnmA (378 aa).

ATP contacts are provided by residues 14–21 and Leu40; that span reads AMSGGVDS. Cys109 acts as the Nucleophile in catalysis. The cysteines at positions 109 and 208 are disulfide-linked. ATP is bound at residue Gly133. The tract at residues 156–158 is interaction with tRNA; the sequence is KDQ. Catalysis depends on Cys208, which acts as the Cysteine persulfide intermediate.

The protein belongs to the MnmA/TRMU family.

Its subcellular location is the cytoplasm. The enzyme catalyses S-sulfanyl-L-cysteinyl-[protein] + uridine(34) in tRNA + AH2 + ATP = 2-thiouridine(34) in tRNA + L-cysteinyl-[protein] + A + AMP + diphosphate + H(+). Its function is as follows. Catalyzes the 2-thiolation of uridine at the wobble position (U34) of tRNA, leading to the formation of s(2)U34. This chain is tRNA-specific 2-thiouridylase MnmA, found in Streptomyces griseus subsp. griseus (strain JCM 4626 / CBS 651.72 / NBRC 13350 / KCC S-0626 / ISP 5235).